The chain runs to 86 residues: RNA-binding protein Hfq (86 aa).

The Sm domain occupies 9 to 68 (DPYLNTLRKEKVGVSIYLVNGIKLQGTIESFDQFVILLKNTVSQMVYKHAISTVVPVRPI).

It belongs to the Hfq family. In terms of assembly, homohexamer.

Its function is as follows. RNA chaperone that binds small regulatory RNA (sRNAs) and mRNAs to facilitate mRNA translational regulation in response to envelope stress, environmental stress and changes in metabolite concentrations. Also binds with high specificity to tRNAs. The polypeptide is RNA-binding protein Hfq (Pseudomonas fluorescens (strain Pf0-1)).